The sequence spans 508 residues: Flagellin (508 aa).

This sequence belongs to the bacterial flagellin family.

It localises to the secreted. Its subcellular location is the bacterial flagellum. Its function is as follows. Flagellin is the subunit protein which polymerizes to form the filaments of bacterial flagella. The polypeptide is Flagellin (fliC) (Salmonella berta).